A 214-amino-acid polypeptide reads, in one-letter code: tRNA (guanine-N(7)-)-methyltransferase (214 aa).

Residues Glu-44, Glu-69, Asp-96, and Asp-118 each contribute to the S-adenosyl-L-methionine site. Asp-118 is an active-site residue. Residue Lys-122 coordinates substrate. Residues 124 to 129 form an interaction with RNA region; that stretch reads RHEKRR. Substrate is bound by residues Asp-154 and 192-195; that span reads TEYE.

This sequence belongs to the class I-like SAM-binding methyltransferase superfamily. TrmB family.

The catalysed reaction is guanosine(46) in tRNA + S-adenosyl-L-methionine = N(7)-methylguanosine(46) in tRNA + S-adenosyl-L-homocysteine. Its pathway is tRNA modification; N(7)-methylguanine-tRNA biosynthesis. Catalyzes the formation of N(7)-methylguanine at position 46 (m7G46) in tRNA. This is tRNA (guanine-N(7)-)-methyltransferase from Lacticaseibacillus casei (strain BL23) (Lactobacillus casei).